Reading from the N-terminus, the 397-residue chain is Ribosomal RNA large subunit methyltransferase I (397 aa).

The region spanning 2–81 is the PUA domain; the sequence is SAQVILQPSR…ESIDNGFFLR (80 aa).

Belongs to the methyltransferase superfamily. RlmI family.

The protein localises to the cytoplasm. The catalysed reaction is cytidine(1962) in 23S rRNA + S-adenosyl-L-methionine = 5-methylcytidine(1962) in 23S rRNA + S-adenosyl-L-homocysteine + H(+). Its function is as follows. Specifically methylates the cytosine at position 1962 (m5C1962) of 23S rRNA. This Alteromonas mediterranea (strain DSM 17117 / CIP 110805 / LMG 28347 / Deep ecotype) protein is Ribosomal RNA large subunit methyltransferase I.